The following is a 418-amino-acid chain: Tryptophan synthase beta chain (418 aa).

Over residues 1–18 the composition is skewed to polar residues; the sequence is MTSTLPNASTPDPASLQP. Positions 1-23 are disordered; that stretch reads MTSTLPNASTPDPASLQPSVRPG. K111 is modified (N6-(pyridoxal phosphate)lysine).

Belongs to the TrpB family. Tetramer of two alpha and two beta chains. It depends on pyridoxal 5'-phosphate as a cofactor.

The catalysed reaction is (1S,2R)-1-C-(indol-3-yl)glycerol 3-phosphate + L-serine = D-glyceraldehyde 3-phosphate + L-tryptophan + H2O. Its pathway is amino-acid biosynthesis; L-tryptophan biosynthesis; L-tryptophan from chorismate: step 5/5. Its function is as follows. The beta subunit is responsible for the synthesis of L-tryptophan from indole and L-serine. This chain is Tryptophan synthase beta chain, found in Parasynechococcus marenigrum (strain WH8102).